We begin with the raw amino-acid sequence, 404 residues long: Argininosuccinate synthase (404 aa).

Residues 13 to 21 (AYSGGLDTS) and A41 each bind ATP. Positions 93 and 98 each coordinate L-citrulline. G123 is an ATP binding site. L-aspartate contacts are provided by T125, N129, and D130. Residue N129 coordinates L-citrulline. L-citrulline-binding residues include R133, S182, S191, E267, and Y279.

This sequence belongs to the argininosuccinate synthase family. Type 1 subfamily. As to quaternary structure, homotetramer.

Its subcellular location is the cytoplasm. It carries out the reaction L-citrulline + L-aspartate + ATP = 2-(N(omega)-L-arginino)succinate + AMP + diphosphate + H(+). The protein operates within amino-acid biosynthesis; L-arginine biosynthesis; L-arginine from L-ornithine and carbamoyl phosphate: step 2/3. The sequence is that of Argininosuccinate synthase from Moritella profunda.